The following is a 92-amino-acid chain: Small ribosomal subunit protein uS19 (92 aa).

The protein belongs to the universal ribosomal protein uS19 family.

Functionally, protein S19 forms a complex with S13 that binds strongly to the 16S ribosomal RNA. The protein is Small ribosomal subunit protein uS19 of Rhizobium rhizogenes (strain K84 / ATCC BAA-868) (Agrobacterium radiobacter).